The chain runs to 254 residues: Cytochrome c oxidase subunit 2 (254 aa).

Residues 12-38 (DAPEPWQICYQDSATKIMSGIDKLTGE) lie on the Mitochondrial intermembrane side of the membrane. The helical transmembrane segment at 39-59 (IFYYETLLLIIVGWVLISAII) threads the bilayer. The Mitochondrial matrix portion of the chain corresponds to 60–73 (KYTKTELSYKYFNH). A helical membrane pass occupies residues 74-94 (GTLIEILWTCSPAFILIAISF). Residues 95-248 (PSFKLLYLMD…KYLEWLNIHL (154 aa)) are Mitochondrial intermembrane-facing. Histidine 182, cysteine 217, glutamate 219, cysteine 221, histidine 225, and methionine 228 together coordinate Cu cation. Glutamate 219 is a binding site for Mg(2+).

Belongs to the cytochrome c oxidase subunit 2 family. In terms of assembly, component of the cytochrome c oxidase (complex IV, CIV), a multisubunit enzyme composed of a catalytic core of 3 subunits and several supernumerary subunits. The complex exists as a monomer or a dimer and forms supercomplexes (SCs) in the inner mitochondrial membrane with ubiquinol-cytochrome c oxidoreductase (cytochrome b-c1 complex, complex III, CIII). It depends on Cu cation as a cofactor.

It localises to the mitochondrion inner membrane. It carries out the reaction 4 Fe(II)-[cytochrome c] + O2 + 8 H(+)(in) = 4 Fe(III)-[cytochrome c] + 2 H2O + 4 H(+)(out). Its function is as follows. Component of the cytochrome c oxidase, the last enzyme in the mitochondrial electron transport chain which drives oxidative phosphorylation. The respiratory chain contains 3 multisubunit complexes succinate dehydrogenase (complex II, CII), ubiquinol-cytochrome c oxidoreductase (cytochrome b-c1 complex, complex III, CIII) and cytochrome c oxidase (complex IV, CIV), that cooperate to transfer electrons derived from NADH and succinate to molecular oxygen, creating an electrochemical gradient over the inner membrane that drives transmembrane transport and the ATP synthase. Cytochrome c oxidase is the component of the respiratory chain that catalyzes the reduction of oxygen to water. Electrons originating from reduced cytochrome c in the intermembrane space (IMS) are transferred via the dinuclear copper A center (CU(A)) of subunit 2 and heme A of subunit 1 to the active site in subunit 1, a binuclear center (BNC) formed by heme A3 and copper B (CU(B)). The BNC reduces molecular oxygen to 2 water molecules using 4 electrons from cytochrome c in the IMS and 4 protons from the mitochondrial matrix. The protein is Cytochrome c oxidase subunit 2 of Zancudomyces culisetae (Gut fungus).